Reading from the N-terminus, the 431-residue chain is Polygalacturonase ADPG1 (431 aa).

The first 23 residues, 1 to 23 (MARCCRHLAVFLCVLLMLSLCKA), serve as a signal peptide directing secretion. PbH1 repeat units follow at residues 223–249 (CNKVEVSNVEITAPGDSPNTDGIHITN) and 250–271 (TQNIRVSNSDIGTGDDCISIED). Residue Asp-264 is the Proton donor of the active site. Residue His-287 is part of the active site. PbH1 repeat units follow at residues 303–324 (VSGINVDGAKFSESDNGVRIKT), 332–353 (AKNIKFQNIRMENVKNPIIIDQ), and 398–420 (CQGIVLENVKIKGGTASCKNANV).

The protein belongs to the glycosyl hydrolase 28 family. As to expression, expressed in flower buds and siliques, in the dehiscence zone of anthers (stomium cells) and maturing siliques. Expressed in stigma during pollen tube growth. Not expressed in seeds or in the floral part or leaf abscission zone but found at the junction between the seed and the funiculus at the site of seed abscission.

The protein localises to the secreted. It localises to the cell wall. It is found in the cytoplasm. It catalyses the reaction (1,4-alpha-D-galacturonosyl)n+m + H2O = (1,4-alpha-D-galacturonosyl)n + (1,4-alpha-D-galacturonosyl)m.. Functionally, polygalacturonase involved in cell separation in the final stages of pod shatter and in anther dehiscence. Not involved in floral organ abscission. The protein is Polygalacturonase ADPG1 (ADPG1) of Arabidopsis thaliana (Mouse-ear cress).